The sequence spans 212 residues: MQEIFNRIFRDNKSIYTLSENNKRVYGEKIIRKKNSYLREWDPRRSKLAAAILKGFKHANFDKKLNILYLGASTGTTVSHLSDICISGRLYAVELSYDSFVKLYSLSQARNNIFPILEDANLVERYKFFVEKCDFIYQDIAQRNQVQIFNQNADIFKPRSAILIIKIKAISSKEPEKKILKETISSIRKYNIKEIIDLRPYDIGNYLVYMER.

S-adenosyl-L-methionine is bound by residues 76 to 77 (TT), 94 to 95 (EL), 119 to 120 (DA), and 139 to 142 (DIAQ).

Belongs to the methyltransferase superfamily. Fibrillarin family. Interacts with nop5. Component of box C/D small ribonucleoprotein (sRNP) particles that contain rpl7ae, FlpA and nop5, plus a guide RNA.

In terms of biological role, involved in pre-rRNA and tRNA processing. Utilizes the methyl donor S-adenosyl-L-methionine to catalyze the site-specific 2'-hydroxyl methylation of ribose moieties in rRNA and tRNA. Site specificity is provided by a guide RNA that base pairs with the substrate. Methylation occurs at a characteristic distance from the sequence involved in base pairing with the guide RNA. The sequence is that of Fibrillarin-like rRNA/tRNA 2'-O-methyltransferase from Picrophilus torridus (strain ATCC 700027 / DSM 9790 / JCM 10055 / NBRC 100828 / KAW 2/3).